The chain runs to 330 residues: Flotillin-like protein FloA (330 aa).

Helical transmembrane passes span 6-26 (LLLFVIIAAGLIVLSIFFTFV) and 28-48 (VMLWISALAAGVRVSIFTLVG).

It belongs to the flotillin-like FloA family. In terms of assembly, homooligomerizes.

Its subcellular location is the cell membrane. The protein localises to the membrane raft. In terms of biological role, found in functional membrane microdomains (FMM) that may be equivalent to eukaryotic membrane rafts. FMMs are highly dynamic and increase in number as cells age. Flotillins are thought to be important factors in membrane fluidity. The protein is Flotillin-like protein FloA of Bacillus pumilus (strain SAFR-032).